The following is a 487-amino-acid chain: Inosine-5'-monophosphate dehydrogenase (487 aa).

CBS domains lie at 93–149 (IVSD…NKTV) and 153–214 (MTPK…CKDE). Residues Asp-248, 248 to 250 (DSS), and 298 to 300 (GIG) each bind NAD(+). K(+)-binding residues include Gly-300 and Gly-302. Position 303 (Ser-303) interacts with IMP. Cys-305 contributes to the K(+) binding site. Residue Cys-305 is the Thioimidate intermediate of the active site. Residues 338–340 (DGG), 361–362 (GS), and 385–389 (YRGMG) each bind IMP. The active-site Proton acceptor is Arg-401. Glu-415 lines the IMP pocket. K(+)-binding residues include Glu-469, Ser-470, and His-471.

The protein belongs to the IMPDH/GMPR family. Homotetramer. K(+) is required as a cofactor.

The catalysed reaction is IMP + NAD(+) + H2O = XMP + NADH + H(+). The protein operates within purine metabolism; XMP biosynthesis via de novo pathway; XMP from IMP: step 1/1. With respect to regulation, mycophenolic acid (MPA) is a non-competitive inhibitor that prevents formation of the closed enzyme conformation by binding to the same site as the amobile flap. In contrast, mizoribine monophosphate (MZP) is a competitive inhibitor that induces the closed conformation. MPA is a potent inhibitor of mammalian IMPDHs but a poor inhibitor of the bacterial enzymes. MZP is a more potent inhibitor of bacterial IMPDH. Functionally, catalyzes the conversion of inosine 5'-phosphate (IMP) to xanthosine 5'-phosphate (XMP), the first committed and rate-limiting step in the de novo synthesis of guanine nucleotides, and therefore plays an important role in the regulation of cell growth. The chain is Inosine-5'-monophosphate dehydrogenase from Pasteurella multocida (strain Pm70).